The following is a 394-amino-acid chain: Ketoisovalerate oxidoreductase subunit VorA (394 aa).

As to quaternary structure, heterotetramer of one alpha, one beta, one delta and one gamma chain.

It catalyses the reaction 3-methyl-2-oxobutanoate + 2 oxidized [2Fe-2S]-[ferredoxin] + CoA = 2-methylpropanoyl-CoA + 2 reduced [2Fe-2S]-[ferredoxin] + CO2 + H(+). This is Ketoisovalerate oxidoreductase subunit VorA (vorA) from Pyrococcus horikoshii (strain ATCC 700860 / DSM 12428 / JCM 9974 / NBRC 100139 / OT-3).